We begin with the raw amino-acid sequence, 616 residues long: Dihydroxy-acid dehydratase (616 aa).

A Mg(2+)-binding site is contributed by Asp81. Cys122 lines the [2Fe-2S] cluster pocket. Mg(2+)-binding residues include Asp123 and Lys124. Position 124 is an N6-carboxylysine (Lys124). Residue Cys195 participates in [2Fe-2S] cluster binding. Glu491 is a Mg(2+) binding site. The Proton acceptor role is filled by Ser517.

Belongs to the IlvD/Edd family. In terms of assembly, homodimer. Requires [2Fe-2S] cluster as cofactor. The cofactor is Mg(2+).

It carries out the reaction (2R)-2,3-dihydroxy-3-methylbutanoate = 3-methyl-2-oxobutanoate + H2O. It catalyses the reaction (2R,3R)-2,3-dihydroxy-3-methylpentanoate = (S)-3-methyl-2-oxopentanoate + H2O. It participates in amino-acid biosynthesis; L-isoleucine biosynthesis; L-isoleucine from 2-oxobutanoate: step 3/4. The protein operates within amino-acid biosynthesis; L-valine biosynthesis; L-valine from pyruvate: step 3/4. Functions in the biosynthesis of branched-chain amino acids. Catalyzes the dehydration of (2R,3R)-2,3-dihydroxy-3-methylpentanoate (2,3-dihydroxy-3-methylvalerate) into 2-oxo-3-methylpentanoate (2-oxo-3-methylvalerate) and of (2R)-2,3-dihydroxy-3-methylbutanoate (2,3-dihydroxyisovalerate) into 2-oxo-3-methylbutanoate (2-oxoisovalerate), the penultimate precursor to L-isoleucine and L-valine, respectively. This Salmonella paratyphi C (strain RKS4594) protein is Dihydroxy-acid dehydratase.